A 517-amino-acid chain; its full sequence is Bifunctional purine biosynthesis protein PurH (517 aa).

The 146-residue stretch at 1-146 (MKRLALLSTS…KNFAHLTVLC (146 aa)) folds into the MGS-like domain.

It belongs to the PurH family.

The enzyme catalyses (6R)-10-formyltetrahydrofolate + 5-amino-1-(5-phospho-beta-D-ribosyl)imidazole-4-carboxamide = 5-formamido-1-(5-phospho-D-ribosyl)imidazole-4-carboxamide + (6S)-5,6,7,8-tetrahydrofolate. The catalysed reaction is IMP + H2O = 5-formamido-1-(5-phospho-D-ribosyl)imidazole-4-carboxamide. Its pathway is purine metabolism; IMP biosynthesis via de novo pathway; 5-formamido-1-(5-phospho-D-ribosyl)imidazole-4-carboxamide from 5-amino-1-(5-phospho-D-ribosyl)imidazole-4-carboxamide (10-formyl THF route): step 1/1. It functions in the pathway purine metabolism; IMP biosynthesis via de novo pathway; IMP from 5-formamido-1-(5-phospho-D-ribosyl)imidazole-4-carboxamide: step 1/1. This chain is Bifunctional purine biosynthesis protein PurH, found in Trichodesmium erythraeum (strain IMS101).